A 413-amino-acid polypeptide reads, in one-letter code: Gamma-lactamase FDB1 (413 aa).

H126, H128, D130, H131, H211, D235, and H323 together coordinate Zn(2+).

It belongs to the metallo-beta-lactamase superfamily.

It functions in the pathway xenobiotic degradation. Functionally, gamma-lactamase; part of the Fusarium detoxification of benzoxazolinone cluster involved in the degradation of benzoxazolinones produced by the host plant. Maize, wheat, and rye produce the 2 benzoxazinone phytoanticipins 2,4-dihy-droxy-7-methoxy-1,4-benzoxazin-3-one (DIMBOA) and 2,4-dihydroxy-1,4-benzoxazin-3-one (DIBOA) that, due to their inherent instability once released, spontaneously degrade to the more stable corresponding benzoxazolinones, 6-methoxy-2-benzoxazolinone (MBOA) and 2-benzoxazolinone (BOA), respectively. The first step in the detoxification of benzoxazolinones involves the hydrolysis of the cyclic ester bond of benzoxazolinones by the gamma-lactamase FDB1 to aminophenols. FDB1 is able to convert BOA into 2-aminophenol (2-AP), as well as MBOA into 5-methoxy-2-aminophenol (2-AMP). The N-malonyltransferase FDB2 then metabolizes aminophenols via N-malonylation to non-toxic malonamic acids. FDB2 converts 2-AP into N-(2-hydroxyphenyl) malonamic acid (HPMA) and 2-AMP into N-(2-hydroxy-4-methoxyphenyl) malonamic acid (HMPMA). The cluster also contains 2 transcription factors (FDB3 and FPSE_08121), an aldo-keto reductase (FPSE_08125) that possibly associates with a ketone component of BOA and MBOA degradation, an esterase (FPSE_08126), an acyl-CoA transferase (FPSE_08120), a solute carrier protein (FPSE_08119) and a transmembrane transporter (FPSE_08127) proposed to shuttle metabolites of benzoxazolinone degradation. The sequence is that of Gamma-lactamase FDB1 from Fusarium pseudograminearum (strain CS3096) (Wheat and barley crown-rot fungus).